The sequence spans 256 residues: Probable hydroxyacylglutathione hydrolase SPCC13B11.03c (256 aa).

Residues H63, H65, D67, H68, H118, and D139 each contribute to the Zn(2+) site. Substrate is bound by residues 148–150 (RFF), 178–180 (HEY), and 250–253 (RTLK). H178 contributes to the Zn(2+) binding site.

This sequence belongs to the metallo-beta-lactamase superfamily. Glyoxalase II family. Zn(2+) serves as cofactor.

Its subcellular location is the cytoplasm. It is found in the nucleus. The catalysed reaction is an S-(2-hydroxyacyl)glutathione + H2O = a 2-hydroxy carboxylate + glutathione + H(+). The enzyme catalyses (R)-S-lactoylglutathione + H2O = (R)-lactate + glutathione + H(+). It functions in the pathway secondary metabolite metabolism; methylglyoxal degradation; (R)-lactate from methylglyoxal: step 2/2. Its function is as follows. Thiolesterase that catalyzes the hydrolysis of S-D-lactoylglutathione to form glutathione and D-lactic acid. Involved in the metabolism of methylglyoxal, a toxic compound for yeast proliferation, by converting methylglyoxal to lactate via S-D-lactoylglutathione by sequential enzyme reactions catalyzed by glyoxalase I and glyoxalase II. In Schizosaccharomyces pombe (strain 972 / ATCC 24843) (Fission yeast), this protein is Probable hydroxyacylglutathione hydrolase SPCC13B11.03c.